The following is a 225-amino-acid chain: uncharacterized protein (225 aa).

Positions 1-22 are cleaved as a signal peptide; sequence MLQHYSVSWKKGLAALCLLAVA. Residues 161–190 form the 4Fe-4S ferredoxin-type domain; the sequence is GNLTAAEEKKTGCLVCLDSCPVGIVSNATY.

This is an uncharacterized protein from Escherichia coli (strain K12).